We begin with the raw amino-acid sequence, 467 residues long: Methylenetetrahydrofolate--tRNA-(uracil-5-)-methyltransferase TrmFO (467 aa).

10–15 (GAGLAG) serves as a coordination point for FAD.

Belongs to the MnmG family. TrmFO subfamily. FAD serves as cofactor.

It localises to the cytoplasm. It catalyses the reaction uridine(54) in tRNA + (6R)-5,10-methylene-5,6,7,8-tetrahydrofolate + NADH + H(+) = 5-methyluridine(54) in tRNA + (6S)-5,6,7,8-tetrahydrofolate + NAD(+). It carries out the reaction uridine(54) in tRNA + (6R)-5,10-methylene-5,6,7,8-tetrahydrofolate + NADPH + H(+) = 5-methyluridine(54) in tRNA + (6S)-5,6,7,8-tetrahydrofolate + NADP(+). Functionally, catalyzes the folate-dependent formation of 5-methyl-uridine at position 54 (M-5-U54) in all tRNAs. The sequence is that of Methylenetetrahydrofolate--tRNA-(uracil-5-)-methyltransferase TrmFO from Prochlorococcus marinus (strain MIT 9515).